The sequence spans 424 residues: Imidazolonepropionase (424 aa).

Fe(3+) contacts are provided by His-84 and His-86. Zn(2+) is bound by residues His-84 and His-86. 4-imidazolone-5-propanoate-binding residues include Arg-93, Tyr-156, and His-189. N-formimidoyl-L-glutamate is bound at residue Tyr-156. His-254 provides a ligand contact to Fe(3+). His-254 serves as a coordination point for Zn(2+). Residue Glu-257 participates in 4-imidazolone-5-propanoate binding. Asp-328 contacts Fe(3+). Asp-328 serves as a coordination point for Zn(2+). Positions 330 and 332 each coordinate N-formimidoyl-L-glutamate. Residue Ser-333 coordinates 4-imidazolone-5-propanoate.

It belongs to the metallo-dependent hydrolases superfamily. HutI family. It depends on Zn(2+) as a cofactor. Fe(3+) is required as a cofactor.

The protein resides in the cytoplasm. The catalysed reaction is 4-imidazolone-5-propanoate + H2O = N-formimidoyl-L-glutamate. Its pathway is amino-acid degradation; L-histidine degradation into L-glutamate; N-formimidoyl-L-glutamate from L-histidine: step 3/3. Its function is as follows. Catalyzes the hydrolytic cleavage of the carbon-nitrogen bond in imidazolone-5-propanoate to yield N-formimidoyl-L-glutamate. It is the third step in the universal histidine degradation pathway. The polypeptide is Imidazolonepropionase (Geobacillus thermodenitrificans (strain NG80-2)).